The chain runs to 694 residues: Elongation factor G (694 aa).

The region spanning 6–288 (KLYRNIGIAA…GVIEYLPSPT (283 aa)) is the tr-type G domain. GTP contacts are provided by residues 15 to 22 (AHVDAGKT), 86 to 90 (DTPGH), and 140 to 143 (NKMD).

It belongs to the TRAFAC class translation factor GTPase superfamily. Classic translation factor GTPase family. EF-G/EF-2 subfamily.

The protein resides in the cytoplasm. Its function is as follows. Catalyzes the GTP-dependent ribosomal translocation step during translation elongation. During this step, the ribosome changes from the pre-translocational (PRE) to the post-translocational (POST) state as the newly formed A-site-bound peptidyl-tRNA and P-site-bound deacylated tRNA move to the P and E sites, respectively. Catalyzes the coordinated movement of the two tRNA molecules, the mRNA and conformational changes in the ribosome. In Legionella pneumophila (strain Corby), this protein is Elongation factor G.